The sequence spans 192 residues: NF-kappa-B inhibitor-interacting Ras-like protein 1 (192 aa).

11–18 is a GTP binding site; it reads GLLSVGKT. The short motif at 35-43 is the Effector region element; that stretch reads DCETMEDVY. An interactions with NFKBIA and NFKBIB region spans residues 58–93; that stretch reads HLYDTRGLQEGVELPKHYFSFADGFVLVYSVNNLES. Residues 61-65 and 120-123 each bind GTP; these read DTRGL and NKID. The interval 168-192 is disordered; that stretch reads LSQPQSKSSFPLPGRKNKGNSNSEN.

The protein belongs to the small GTPase superfamily. Ras family. KappaB-Ras subfamily. Interacts with both NF-kappa-B inhibitor alpha (NFKBIA) and beta (NFKBIB) in vitro. However, it probably only interacts with NFKBIB in vivo. Forms a complex with NFKBIB and NF-kappa-B heterodimer (p50/NFKB1 and p65/RELA). Also interacts with c-Rel (REL). In terms of tissue distribution, widely expressed.

It is found in the cytoplasm. In terms of biological role, atypical Ras-like protein that acts as a potent regulator of NF-kappa-B activity by preventing the degradation of NF-kappa-B inhibitor beta (NFKBIB) by most signals, explaining why NFKBIB is more resistant to degradation. May act by blocking phosphorylation of NFKBIB and mediating cytoplasmic retention of p65/RELA NF-kappa-B subunit. It is unclear whether it acts as a GTPase. Both GTP- and GDP-bound forms block phosphorylation of NFKBIB. The protein is NF-kappa-B inhibitor-interacting Ras-like protein 1 (NKIRAS1) of Homo sapiens (Human).